The following is a 154-amino-acid chain: 6,7-dimethyl-8-ribityllumazine synthase (154 aa).

5-amino-6-(D-ribitylamino)uracil is bound by residues Phe-22, Ala-56 to Glu-58, and Ala-80 to Ile-82. Glu-85–Thr-86 is a (2S)-2-hydroxy-3-oxobutyl phosphate binding site. The active-site Proton donor is His-88. Phe-113 serves as a coordination point for 5-amino-6-(D-ribitylamino)uracil. Arg-127 is a (2S)-2-hydroxy-3-oxobutyl phosphate binding site.

The protein belongs to the DMRL synthase family.

It catalyses the reaction (2S)-2-hydroxy-3-oxobutyl phosphate + 5-amino-6-(D-ribitylamino)uracil = 6,7-dimethyl-8-(1-D-ribityl)lumazine + phosphate + 2 H2O + H(+). It participates in cofactor biosynthesis; riboflavin biosynthesis; riboflavin from 2-hydroxy-3-oxobutyl phosphate and 5-amino-6-(D-ribitylamino)uracil: step 1/2. Catalyzes the formation of 6,7-dimethyl-8-ribityllumazine by condensation of 5-amino-6-(D-ribitylamino)uracil with 3,4-dihydroxy-2-butanone 4-phosphate. This is the penultimate step in the biosynthesis of riboflavin. The protein is 6,7-dimethyl-8-ribityllumazine synthase of Thermoanaerobacter sp. (strain X514).